Reading from the N-terminus, the 360-residue chain is Phospho-N-acetylmuramoyl-pentapeptide-transferase (360 aa).

Helical transmembrane passes span 26 to 46, 74 to 94, 97 to 117, 132 to 152, 168 to 188, 199 to 219, 236 to 256, 263 to 283, 288 to 308, and 338 to 358; these read AILA…KLIE, MGGL…GDLG, YVWV…IDDY, WKYI…FYST, ILPQ…VGAS, GLAI…AYLS, SGEL…FLWF, VFMG…IAVL, ILLV…ILQV, and VIVR…ATLK.

It belongs to the glycosyltransferase 4 family. MraY subfamily. The cofactor is Mg(2+).

The protein localises to the cell inner membrane. It catalyses the reaction UDP-N-acetyl-alpha-D-muramoyl-L-alanyl-gamma-D-glutamyl-meso-2,6-diaminopimeloyl-D-alanyl-D-alanine + di-trans,octa-cis-undecaprenyl phosphate = di-trans,octa-cis-undecaprenyl diphospho-N-acetyl-alpha-D-muramoyl-L-alanyl-D-glutamyl-meso-2,6-diaminopimeloyl-D-alanyl-D-alanine + UMP. It functions in the pathway cell wall biogenesis; peptidoglycan biosynthesis. Catalyzes the initial step of the lipid cycle reactions in the biosynthesis of the cell wall peptidoglycan: transfers peptidoglycan precursor phospho-MurNAc-pentapeptide from UDP-MurNAc-pentapeptide onto the lipid carrier undecaprenyl phosphate, yielding undecaprenyl-pyrophosphoryl-MurNAc-pentapeptide, known as lipid I. This is Phospho-N-acetylmuramoyl-pentapeptide-transferase from Shewanella amazonensis (strain ATCC BAA-1098 / SB2B).